Reading from the N-terminus, the 308-residue chain is FGSLLGLCLITQIITGLLLAMHYTADTSLAFTSVAHMCRNVQFGWLIRNLHANGASFFFICIYLHIGRGIYYGSYLNKETWNIGVILLLTLMATAFVGYVLPWGQMSFWGATVITNLFSAIPYIGQTLVEWLWGGFSVDNPTLTRFFAFHFLLPFVIAGLTLVHLTFLHETGSNNPLGIPSDCDKIPFHPYYSIKDLLGFALMLIPLITLALFSPNLLGDPENFTPANPLATPPHIKPEWYFLFAYAILRSIPNKLGGVLALAASVLILFLIPLLHVSKQRSMTFRPLSQILFWTLVADLLILTWVGS.

4 consecutive transmembrane segments (helical) span residues 1–21 (FGSL…LLAM), 45–66 (WLIR…YLHI), 81–101 (WNIG…GYVL), and 146–166 (FFAF…VHLT). Heme b contacts are provided by His-51 and His-65. The heme b site is built by His-150 and His-164. His-169 contacts a ubiquinone. A run of 3 helical transmembrane segments spans residues 194–214 (IKDL…ALFS), 256–276 (LGGV…PLLH), and 288–308 (LSQI…WVGS).

The protein belongs to the cytochrome b family. The cytochrome bc1 complex contains 11 subunits: 3 respiratory subunits (MT-CYB, CYC1 and UQCRFS1), 2 core proteins (UQCRC1 and UQCRC2) and 6 low-molecular weight proteins (UQCRH/QCR6, UQCRB/QCR7, UQCRQ/QCR8, UQCR10/QCR9, UQCR11/QCR10 and a cleavage product of UQCRFS1). This cytochrome bc1 complex then forms a dimer. Heme b serves as cofactor.

It is found in the mitochondrion inner membrane. Its function is as follows. Component of the ubiquinol-cytochrome c reductase complex (complex III or cytochrome b-c1 complex) that is part of the mitochondrial respiratory chain. The b-c1 complex mediates electron transfer from ubiquinol to cytochrome c. Contributes to the generation of a proton gradient across the mitochondrial membrane that is then used for ATP synthesis. This chain is Cytochrome b (MT-CYB), found in Corvus corax (Common raven).